A 272-amino-acid polypeptide reads, in one-letter code: Putative phosphoenolpyruvate synthase regulatory protein (272 aa).

152 to 159 (GVSRCGKT) contributes to the ADP binding site.

This sequence belongs to the pyruvate, phosphate/water dikinase regulatory protein family. PSRP subfamily.

The catalysed reaction is [pyruvate, water dikinase] + ADP = [pyruvate, water dikinase]-phosphate + AMP + H(+). It carries out the reaction [pyruvate, water dikinase]-phosphate + phosphate + H(+) = [pyruvate, water dikinase] + diphosphate. Its function is as follows. Bifunctional serine/threonine kinase and phosphorylase involved in the regulation of the phosphoenolpyruvate synthase (PEPS) by catalyzing its phosphorylation/dephosphorylation. This chain is Putative phosphoenolpyruvate synthase regulatory protein, found in Pseudomonas putida (strain ATCC 47054 / DSM 6125 / CFBP 8728 / NCIMB 11950 / KT2440).